The sequence spans 327 residues: Annexin A8 (327 aa).

4 Annexin repeats span residues 21 to 92 (FNPD…ALMY), 93 to 164 (PPYR…CLLQ), 177 to 249 (GLAL…TVVK), and 253 to 324 (NLHS…SLVG). Residues M266, G268, G270, and D310 each contribute to the Ca(2+) site.

It belongs to the annexin family.

This protein is an anticoagulant protein that acts as an indirect inhibitor of the thromboplastin-specific complex, which is involved in the blood coagulation cascade. This is Annexin A8 (ANXA8) from Pan troglodytes (Chimpanzee).